The sequence spans 411 residues: MMP alpha-(1-&gt;4)-mannosyltransferase (411 aa).

This sequence belongs to the glycosyltransferase group 1 family. Glycosyltransferase 4 subfamily.

It carries out the reaction [3-O-methyl-alpha-D-mannosyl-(1-&gt;4)](n)-3-O-methyl-D-mannose + GDP-alpha-D-mannose = alpha-D-mannosyl-(1-&gt;4)-[3-O-methyl-alpha-D-mannosyl-(1-&gt;4)](n)-3-O-methyl-D-mannose + GDP + H(+). The enzyme catalyses [3-O-methyl-alpha-D-mannosyl-(1-&gt;4)](n)-1-O,3-O-dimethyl-alpha-D-mannose + GDP-alpha-D-mannose = alpha-D-mannosyl-(1-&gt;4)-[3-O-methyl-alpha-D-mannosyl-(1-&gt;4)](n)-1-O,3-O-dimethyl-alpha-D-mannose + GDP + H(+). Its activity is regulated as follows. Activity is significantly enhanced in the presence of Mg(2+). In terms of biological role, glycosyltransferase involved in the biosynthesis of 3-O-methylmannose polysaccharides (MMP), which are intracellular polymethylated polysaccharides implicated in the modulation of fatty acid metabolism in non-tuberculous mycobacteria. Highly specific alpha-(1-&gt;4)-mannosyltransferase that can transfer mannose units from GDP-mannose to a wide range of alpha-(1-&gt;4) oligomannosides longer than three mannoses, including all hydrolytic products of MmpH. Can use synthetic trimannosides and tetramannosides as substrates, but not mono- and disaccharides, and is significantly more active with the methylated substrates, preferring the tetramannosides over the trimannosides. In Mycolicibacterium hassiacum (strain DSM 44199 / CIP 105218 / JCM 12690 / 3849) (Mycobacterium hassiacum), this protein is MMP alpha-(1-&gt;4)-mannosyltransferase.